The following is a 351-amino-acid chain: N-acetyl-gamma-glutamyl-phosphate reductase (351 aa).

Residue Cys-154 is part of the active site.

Belongs to the NAGSA dehydrogenase family. Type 1 subfamily.

The protein resides in the cytoplasm. It carries out the reaction N-acetyl-L-glutamate 5-semialdehyde + phosphate + NADP(+) = N-acetyl-L-glutamyl 5-phosphate + NADPH + H(+). Its pathway is amino-acid biosynthesis; L-arginine biosynthesis; N(2)-acetyl-L-ornithine from L-glutamate: step 3/4. Functionally, catalyzes the NADPH-dependent reduction of N-acetyl-5-glutamyl phosphate to yield N-acetyl-L-glutamate 5-semialdehyde. The sequence is that of N-acetyl-gamma-glutamyl-phosphate reductase from Prochlorococcus marinus (strain MIT 9515).